A 190-amino-acid chain; its full sequence is Threonylcarbamoyl-AMP synthase (190 aa).

A YrdC-like domain is found at 9–190 (FLQLALARQT…IDIVTGQQFR (182 aa)).

This sequence belongs to the SUA5 family. TsaC subfamily.

The protein resides in the cytoplasm. The catalysed reaction is L-threonine + hydrogencarbonate + ATP = L-threonylcarbamoyladenylate + diphosphate + H2O. Its function is as follows. Required for the formation of a threonylcarbamoyl group on adenosine at position 37 (t(6)A37) in tRNAs that read codons beginning with adenine. Catalyzes the conversion of L-threonine, HCO(3)(-)/CO(2) and ATP to give threonylcarbamoyl-AMP (TC-AMP) as the acyladenylate intermediate, with the release of diphosphate. The sequence is that of Threonylcarbamoyl-AMP synthase from Marinobacter nauticus (strain ATCC 700491 / DSM 11845 / VT8) (Marinobacter aquaeolei).